The following is a 292-amino-acid chain: ATP synthase gamma chain (292 aa).

The protein belongs to the ATPase gamma chain family. In terms of assembly, F-type ATPases have 2 components, CF(1) - the catalytic core - and CF(0) - the membrane proton channel. CF(1) has five subunits: alpha(3), beta(3), gamma(1), delta(1), epsilon(1). CF(0) has three main subunits: a, b and c.

It localises to the cell inner membrane. Its function is as follows. Produces ATP from ADP in the presence of a proton gradient across the membrane. The gamma chain is believed to be important in regulating ATPase activity and the flow of protons through the CF(0) complex. The protein is ATP synthase gamma chain of Syntrophobacter fumaroxidans (strain DSM 10017 / MPOB).